A 320-amino-acid polypeptide reads, in one-letter code: Mycothiol acetyltransferase (320 aa).

N-acetyltransferase domains lie at S8 to R141 and L152 to A320. E36 serves as a coordination point for 1D-myo-inositol 2-(L-cysteinylamino)-2-deoxy-alpha-D-glucopyranoside. Residues L80–V82 and R88–T93 contribute to the acetyl-CoA site. Residues E179, K229, and E239 each coordinate 1D-myo-inositol 2-(L-cysteinylamino)-2-deoxy-alpha-D-glucopyranoside. Acetyl-CoA contacts are provided by residues L243–V245 and Q250–R256. Y284 serves as a coordination point for 1D-myo-inositol 2-(L-cysteinylamino)-2-deoxy-alpha-D-glucopyranoside. N289–R294 lines the acetyl-CoA pocket.

The protein belongs to the acetyltransferase family. MshD subfamily. In terms of assembly, monomer.

The enzyme catalyses 1D-myo-inositol 2-(L-cysteinylamino)-2-deoxy-alpha-D-glucopyranoside + acetyl-CoA = mycothiol + CoA + H(+). Its function is as follows. Catalyzes the transfer of acetyl from acetyl-CoA to desacetylmycothiol (Cys-GlcN-Ins) to form mycothiol. The protein is Mycothiol acetyltransferase of Mycobacterium ulcerans (strain Agy99).